The following is a 184-amino-acid chain: GTP cyclohydrolase 1 (184 aa).

Positions 75, 78, and 146 each coordinate Zn(2+).

This sequence belongs to the GTP cyclohydrolase I family. Toroid-shaped homodecamer, composed of two pentamers of five dimers.

It catalyses the reaction GTP + H2O = 7,8-dihydroneopterin 3'-triphosphate + formate + H(+). The protein operates within cofactor biosynthesis; 7,8-dihydroneopterin triphosphate biosynthesis; 7,8-dihydroneopterin triphosphate from GTP: step 1/1. This Pseudoalteromonas translucida (strain TAC 125) protein is GTP cyclohydrolase 1.